We begin with the raw amino-acid sequence, 166 residues long: Small ribosomal subunit protein uS5 (166 aa).

An S5 DRBM domain is found at 11 to 74 (LQEKLIAVNR…EKARRNMITV (64 aa)).

It belongs to the universal ribosomal protein uS5 family. In terms of assembly, part of the 30S ribosomal subunit. Contacts proteins S4 and S8.

With S4 and S12 plays an important role in translational accuracy. Functionally, located at the back of the 30S subunit body where it stabilizes the conformation of the head with respect to the body. This is Small ribosomal subunit protein uS5 from Histophilus somni (strain 2336) (Haemophilus somnus).